The primary structure comprises 160 residues: MTADVPNARLVDVELDESIGRSTPDVEHERAVAIFDLIEENSFHPVGDQKGGPYRLKLSLMESRLIFSITRENGDAVATHILSLTPLRRVVRDYFMIYESYYQAIRSATPSKIEAIDMGRRGLHNEGSQTLQARLKGKIEVDFDTARRLFTLVCVLHWRG.

Belongs to the UPF0262 family.

In Brucella suis (strain ATCC 23445 / NCTC 10510), this protein is UPF0262 protein BSUIS_A0274.